The sequence spans 132 residues: Telomere bouquet protein 1 (132 aa).

In terms of assembly, interacts with bqt2 and sad1. The bqt1-bqt2-sad1 complex binds rap1.

It localises to the cytoplasm. It is found in the cytoskeleton. Its subcellular location is the microtubule organizing center. The protein resides in the spindle pole body. The protein localises to the chromosome. It localises to the telomere. Its function is as follows. Involved in chromosome segregation. During meiotic prophase, connects telomeres to the spindle pole body by forming a bridge between the telomere protein rap1 and the spindle pole body protein sad1. This Schizosaccharomyces pombe (strain 972 / ATCC 24843) (Fission yeast) protein is Telomere bouquet protein 1 (bqt1).